The primary structure comprises 187 residues: Corticoliberin (187 aa).

An N-terminal signal peptide occupies residues 1–19; it reads MRLRLLVSAGMLLVALSSC. A propeptide spanning residues 20–144 is cleaved from the precursor; that stretch reads LPCRALLSRG…HQGALERERR (125 aa). Disordered regions lie at residues 75 to 94 and 114 to 146; these read AARL…SRPS and QRSL…RRSE. Positions 117–129 are enriched in basic and acidic residues; the sequence is LDSRAEPAERGAE. Isoleucine amide is present on Ile185.

The protein belongs to the sauvagine/corticotropin-releasing factor/urotensin I family. Interacts (via C-terminus) with CRFR1 (via N-terminal extracellular domain). In terms of tissue distribution, expressed in parvocellular paraventricular nucleus of the hypothalamus and in medial accessory olivary nucleus.

The protein localises to the secreted. Hormone regulating the release of corticotropin from pituitary gland. Induces NLRP6 in intestinal epithelial cells, hence may influence gut microbiota profile. The protein is Corticoliberin (Crh) of Mus musculus (Mouse).